The chain runs to 247 residues: (7aS)-7a-methyl-1,5-dioxo-2,3,5,6,7,7a-hexahydro-1H-indene-carboxyl-CoA hydrolase (247 aa).

Belongs to the enoyl-CoA hydratase/isomerase family.

It carries out the reaction (7aS)-7a-methyl-1,5-dioxo-2,3,5,6,7,7a-hexahydro-1H-indene-carboxyl-CoA + H2O = (3E)-2-(2-carboxylatoethyl)-3-methyl-6-oxocyclohex-1-ene-1-carboxyl-CoA + H(+). It participates in steroid metabolism; cholesterol degradation. Its function is as follows. Involved in the final steps of cholesterol and steroid degradation. Catalyzes the hydrolytic ring D opening of (7aS)-7a-methyl-1,5-dioxo-2,3,5,6,7,7a-hexahydro-1H-indene-carboxyl-CoA (HIEC-CoA) to (3E)-2-(2-carboxylatoethyl)-3-methyl-6-oxocyclohex-1-ene-1-carboxyl-CoA (COCHEA-CoA). The chain is (7aS)-7a-methyl-1,5-dioxo-2,3,5,6,7,7a-hexahydro-1H-indene-carboxyl-CoA hydrolase from Mycobacterium tuberculosis (strain ATCC 25618 / H37Rv).